A 570-amino-acid polypeptide reads, in one-letter code: Serine/threonine-protein kinase Pink1, mitochondrial (570 aa).

Residues 1–5 constitute a mitochondrion transit peptide; it reads MSVRA. The Mitochondrial intermembrane segment spans residues 6–96; that stretch reads VGSRLFKHGR…AELRKKATRR (91 aa). Residues 97–120 form a helical membrane-spanning segment; sequence ILFGDSAPFFALVGVSIASGTGIL. The Cytoplasmic portion of the chain corresponds to 121–570; that stretch reads TKEEELEGVC…WIQENLPELD (450 aa). Residues 162–484 enclose the Protein kinase domain; that stretch reads LSLGKPIAKG…VAANVCQLFL (323 aa). Residue K196 coordinates ATP. The residue at position 205 (S205) is a Phosphoserine; by autocatalysis. E217 serves as a coordination point for Mg(2+). The ATP site is built by K295, Y297, and N300. Catalysis depends on D337, which acts as the Proton acceptor. Residue D341 participates in ATP binding. Residues N342 and D359 each coordinate Mg(2+). Position 359 (D359) interacts with ATP. S377 carries the post-translational modification Phosphoserine; by autocatalysis. Residue T386 is modified to Phosphothreonine; by autocatalysis. T530 carries the post-translational modification Phosphothreonine.

Belongs to the protein kinase superfamily. Ser/Thr protein kinase family. Mg(2+) serves as cofactor. Post-translationally, proteolytically cleaved. In healthy cells, the precursor is continuously imported into mitochondria where it is proteolytically cleaved into its short form by the mitochondrial rhomboid protease rho-7 (TcasGA2_TC013516). The short form is then released into the cytosol where it rapidly undergoes proteasome-dependent degradation. In unhealthy cells, when cellular stress conditions lead to the loss of mitochondrial membrane potential, mitochondrial import is impaired leading to the precursor accumulating on the outer mitochondrial membrane (OMM). In terms of processing, autophosphorylated on Ser-205, which activates kinase activity and is required for substrate recognition. Loss of mitochondrial membrane potential results in the precursor accumulating on the outer mitochondrial membrane (OMM) where it is activated by autophosphorylation at Ser-205. Autophosphorylation is sufficient and essential for selective recruitment of park to depolarized mitochondria, likely via Pink1-dependent phosphorylation of polyubiquitin chains. Also autophosphorylated at Ser-377, Thr-386 and possibly Thr-530. Another report found evidence of autophosphorylation at Ser-154, Thr-186, Thr-218, Ser-267 and Thr-530, as well as a number of other minor sites, but determined that phosphorylation at these sites is not required for enzyme activity and may not occur in vivo.

The protein localises to the mitochondrion outer membrane. The protein resides in the mitochondrion inner membrane. It localises to the cytoplasm. Its subcellular location is the cytosol. It carries out the reaction L-seryl-[protein] + ATP = O-phospho-L-seryl-[protein] + ADP + H(+). It catalyses the reaction L-threonyl-[protein] + ATP = O-phospho-L-threonyl-[protein] + ADP + H(+). In terms of biological role, acts as a serine/threonine-protein kinase. Exhibits a substrate preference for proline at position P+1 and a general preference at several residues for basic residues such as arginine. Also exhibits moderate preferences for a phosphotyrosine at position P-3 and a tryptophan at P-5. Critical to mitochondrial homeostasis it mediates several pathways that maintain mitochondrial health and function. Protects against mitochondrial dysfunction during cellular stress by phosphorylating mitochondrial proteins such as park and likely Drp1, to coordinate mitochondrial quality control mechanisms that remove and replace dysfunctional mitochondrial components. Depending on the severity of mitochondrial damage and/or dysfunction, activity ranges from preventing apoptosis and stimulating mitochondrial biogenesis to regulating mitochondrial dynamics and eliminating severely damaged mitochondria via mitophagy. Appears to be particularly important in maintaining the physiology and function of cells with high energy demands that are undergoing stress or altered metabolic environment, including spermatids, muscle cells and neurons such as the dopaminergic (DA) neurons. Mediates the translocation and activation of park at the outer membrane (OMM) of dysfunctional/depolarized mitochondria. At the OMM of damaged mitochondria, phosphorylates pre-existing polyubiquitin chains, the Pink1-phosphorylated polyubiquitin then recruits park from the cytosol to the OMM where park is fully activated by phosphorylation at 'Ser-80' by Pink1. When cellular stress results in irreversible mitochondrial damage, functions with park to promote the clearance of dysfunctional and/or depolarized mitochondria by selective autophagy (mitophagy). The Pink1-park pathway also promotes fission and/or inhibits fusion of damaged mitochondria, by phosphorylating and thus promoting the park-dependent degradation of proteins involved in mitochondrial fusion/fission such as Marf, Opa1 and fzo. This prevents the refusion of unhealthy mitochondria with the mitochondrial network or initiates mitochondrial fragmentation facilitating their later engulfment by autophagosomes. Also likely to promote mitochondrial fission independently of park and Atg7-mediated mitophagy, via the phosphorylation and activation of Drp1. Regulates motility of damaged mitochondria by phosphorylating Miro which likely promotes its park-dependent degradation by the proteasome; in motor neurons, this inhibits mitochondrial intracellular anterograde transport along the axons which probably increases the chance of the mitochondria being eliminated in the soma. The Pink1-park pathway is also involved in mitochondrial regeneration processes such as promoting mitochondrial biogenesis, activating localized mitochondrial repair, promoting selective turnover of mitochondrial proteins and initiating the mitochondrial import of endogenous proteins. Involved in mitochondrial biogenesis by promoting the park-dependent ubiquitination of transcriptional repressor Paris which leads to its subsequent proteasomal degradation and allows activation of the transcription factor srl. Functions with park to promote localized mitochondrial repair by activating the translation of specific nuclear-encoded mitochondrial RNAs (nc-mtRNAs) on the mitochondrial surface, including several key electron transport chain component nc-mtRNAs. During oogenesis, phosphorylates and inactivates larp on the membrane of defective mitochondria, thus impairing local translation and mtDNA replication and consequently, reducing transmission of deleterious mtDNA mutations to the mature oocyte. Phosphorylates the mitochondrial acyl-CoA dehydrogenase Mcad, and appears to be important for maintaining fatty acid and amino acid metabolism via a mechanism that is independent of it's role in maintaining production of ATP. The sequence is that of Serine/threonine-protein kinase Pink1, mitochondrial from Tribolium castaneum (Red flour beetle).